Reading from the N-terminus, the 523-residue chain is Glycerate kinase (523 aa).

A Phosphoserine modification is found at serine 60.

Belongs to the glycerate kinase type-2 family. As to expression, widely expressed.

The protein localises to the cytoplasm. The protein resides in the mitochondrion. It catalyses the reaction (R)-glycerate + ATP = (2R)-3-phosphoglycerate + ADP + H(+). In Homo sapiens (Human), this protein is Glycerate kinase (GLYCTK).